A 383-amino-acid chain; its full sequence is Sterol 24-C-methyltransferase ERG6 (383 aa).

An N-acetylserine modification is found at S2. Phosphoserine is present on S99.

This sequence belongs to the class I-like SAM-binding methyltransferase superfamily. Erg6/SMT family. As to quaternary structure, interacts with ERG28.

The protein localises to the microsome. It is found in the mitochondrion. The catalysed reaction is zymosterol + S-adenosyl-L-methionine = fecosterol + S-adenosyl-L-homocysteine + H(+). The protein operates within steroid metabolism; ergosterol biosynthesis; ergosterol from zymosterol: step 1/5. Functionally, sterol 24-C-methyltransferase; part of the third module of ergosterol biosynthesis pathway that includes the late steps of the pathway. ERG6 catalyzes the methyl transfer from S-adenosyl-methionine to the C-24 of zymosterol to form fecosterol. The third module or late pathway involves the ergosterol synthesis itself through consecutive reactions that mainly occur in the endoplasmic reticulum (ER) membrane. Firstly, the squalene synthase ERG9 catalyzes the condensation of 2 farnesyl pyrophosphate moieties to form squalene, which is the precursor of all steroids. Squalene synthase is crucial for balancing the incorporation of farnesyl diphosphate (FPP) into sterol and nonsterol isoprene synthesis. Secondly, the squalene epoxidase ERG1 catalyzes the stereospecific oxidation of squalene to (S)-2,3-epoxysqualene, which is considered to be a rate-limiting enzyme in steroid biosynthesis. Then, the lanosterol synthase ERG7 catalyzes the cyclization of (S)-2,3 oxidosqualene to lanosterol, a reaction that forms the sterol core. In the next steps, lanosterol is transformed to zymosterol through a complex process involving various demethylation, reduction and desaturation reactions. The lanosterol 14-alpha-demethylase ERG11 (also known as CYP51) catalyzes C14-demethylation of lanosterol to produce 4,4'-dimethyl cholesta-8,14,24-triene-3-beta-ol, which is critical for ergosterol biosynthesis. The C-14 reductase ERG24 reduces the C14=C15 double bond of 4,4-dimethyl-cholesta-8,14,24-trienol to produce 4,4-dimethyl-cholesta-8,24-dienol. 4,4-dimethyl-cholesta-8,24-dienol is substrate of the C-4 demethylation complex ERG25-ERG26-ERG27 in which ERG25 catalyzes the three-step monooxygenation required for the demethylation of 4,4-dimethyl and 4alpha-methylsterols, ERG26 catalyzes the oxidative decarboxylation that results in a reduction of the 3-beta-hydroxy group at the C-3 carbon to an oxo group, and ERG27 is responsible for the reduction of the keto group on the C-3. ERG28 has a role as a scaffold to help anchor ERG25, ERG26 and ERG27 to the endoplasmic reticulum and ERG29 regulates the activity of the iron-containing C4-methylsterol oxidase ERG25. Then, the sterol 24-C-methyltransferase ERG6 catalyzes the methyl transfer from S-adenosyl-methionine to the C-24 of zymosterol to form fecosterol. The C-8 sterol isomerase ERG2 catalyzes the reaction which results in unsaturation at C-7 in the B ring of sterols and thus converts fecosterol to episterol. The sterol-C5-desaturase ERG3 then catalyzes the introduction of a C-5 double bond in the B ring to produce 5-dehydroepisterol. The C-22 sterol desaturase ERG5 further converts 5-dehydroepisterol into ergosta-5,7,22,24(28)-tetraen-3beta-ol by forming the C-22(23) double bond in the sterol side chain. Finally, ergosta-5,7,22,24(28)-tetraen-3beta-ol is substrate of the C-24(28) sterol reductase ERG4 to produce ergosterol. The chain is Sterol 24-C-methyltransferase ERG6 from Saccharomyces cerevisiae (strain ATCC 204508 / S288c) (Baker's yeast).